Consider the following 188-residue polypeptide: ATP synthase subunit delta (188 aa).

The protein belongs to the ATPase delta chain family. F-type ATPases have 2 components, F(1) - the catalytic core - and F(0) - the membrane proton channel. F(1) has five subunits: alpha(3), beta(3), gamma(1), delta(1), epsilon(1). F(0) has three main subunits: a(1), b(2) and c(10-14). The alpha and beta chains form an alternating ring which encloses part of the gamma chain. F(1) is attached to F(0) by a central stalk formed by the gamma and epsilon chains, while a peripheral stalk is formed by the delta and b chains.

It localises to the cell inner membrane. Its function is as follows. F(1)F(0) ATP synthase produces ATP from ADP in the presence of a proton or sodium gradient. F-type ATPases consist of two structural domains, F(1) containing the extramembraneous catalytic core and F(0) containing the membrane proton channel, linked together by a central stalk and a peripheral stalk. During catalysis, ATP synthesis in the catalytic domain of F(1) is coupled via a rotary mechanism of the central stalk subunits to proton translocation. In terms of biological role, this protein is part of the stalk that links CF(0) to CF(1). It either transmits conformational changes from CF(0) to CF(1) or is implicated in proton conduction. This chain is ATP synthase subunit delta, found in Paracoccus denitrificans (strain Pd 1222).